The sequence spans 592 residues: Medium-chain-fatty-acid--[acyl-carrier-protein] ligase JamA (592 aa).

The protein belongs to the ATP-dependent AMP-binding enzyme family.

The catalysed reaction is a medium-chain fatty acid + holo-[ACP] + ATP = a medium-chain fatty acyl-[ACP] + AMP + diphosphate. It catalyses the reaction a medium-chain fatty acid + ATP + H(+) = a medium-chain fatty acyl-AMP + diphosphate. It carries out the reaction a medium-chain fatty acyl-AMP + holo-[ACP] = a medium-chain fatty acyl-[ACP] + AMP + H(+). Ligase involved in the biosynthesis of jamaicamides, which show sodium channel blocking activity and fish toxicity. Initiates jamaicamide biosynthesis by the activation of the starter unit, 5-hexenoic acid, followed by the loading of the activated 5-hexenoic acid onto the acyl carrier protein JamC. In vitro, can also use 5-hexynoic acid, heptanoic acid, butanoic acid, hexanoic acid and benzoic acid. The polypeptide is Medium-chain-fatty-acid--[acyl-carrier-protein] ligase JamA (Moorena producens (strain JHB)).